We begin with the raw amino-acid sequence, 110 residues long: Disintegrin jerdostatin (110 aa).

Positions 1-20 are cleaved as a signal peptide; that stretch reads MIQVLLVTICLAVFPYQVSS. A propeptide spanning residues 21 to 67 is cleaved from the precursor; the sequence is KTLKSGSVNEYEVVNPGTVTGLPKGAVKQPEKKHEPMKGNTLQKLPL. One can recognise a Disintegrin domain in the interval 27–110; it reads SVNEYEVVNP…CECPSYPGNG (84 aa). Disulfide bonds link cysteine 68–cysteine 77, cysteine 73–cysteine 96, cysteine 74–cysteine 101, and cysteine 86–cysteine 103. Positions 88 to 90 match the Cell attachment site; atypical (RTS) motif; it reads RTS.

This sequence belongs to the disintegrin family. Short disintegrin subfamily. Monomer. Two conformers are found, they may differ by their disulfide bond connectivities. Conformer 2 is 33 times less active than conformer 1. Conformer 2 may represent a non-native protein. Post-translationally, the C-terminal dipeptide may be post-translationally removed, as seen in disintegrins that possess a KTS integrin-binding motif. Expressed by the venom gland.

The protein localises to the secreted. In terms of biological role, recombinant protein inhibits the adhesion of alpha-1/beta-1-K562 (ITGA1/ITGB1) cells to collagen IV with an IC(50) of 80 nM. This is Disintegrin jerdostatin from Protobothrops jerdonii (Jerdon's pitviper).